The following is a 147-amino-acid chain: Nucleoside diphosphate kinase (147 aa).

ATP is bound by residues Lys9, Phe57, Arg85, Thr91, Arg102, and Asn112. His115 functions as the Pros-phosphohistidine intermediate in the catalytic mechanism.

The protein belongs to the NDK family. Homotetramer. Mg(2+) is required as a cofactor.

The protein localises to the cytoplasm. It carries out the reaction a 2'-deoxyribonucleoside 5'-diphosphate + ATP = a 2'-deoxyribonucleoside 5'-triphosphate + ADP. The catalysed reaction is a ribonucleoside 5'-diphosphate + ATP = a ribonucleoside 5'-triphosphate + ADP. Functionally, major role in the synthesis of nucleoside triphosphates other than ATP. The ATP gamma phosphate is transferred to the NDP beta phosphate via a ping-pong mechanism, using a phosphorylated active-site intermediate. This chain is Nucleoside diphosphate kinase, found in Listeria welshimeri serovar 6b (strain ATCC 35897 / DSM 20650 / CCUG 15529 / CIP 8149 / NCTC 11857 / SLCC 5334 / V8).